A 261-amino-acid chain; its full sequence is Transcription repressor OFP15 (261 aa).

The disordered stretch occupies residues M1–S28. Over residues S11–S28 the composition is skewed to low complexity. Residues F112–N172 enclose the OVATE domain.

Interacts with BLH1 and BLH3. In terms of tissue distribution, expressed in roots, cauline leaves, shoots, flower buds and siliques.

The protein resides in the nucleus. In terms of biological role, transcriptional repressor that regulates multiple aspects of plant growth and development through the regulation of BEL1-LIKE (BLH) and KNOX TALE (KNAT) homeodomain transcription factors. The polypeptide is Transcription repressor OFP15 (OFP15) (Arabidopsis thaliana (Mouse-ear cress)).